Consider the following 61-residue polypeptide: Small ribosomal subunit protein uS14 (61 aa).

Residues C24, C27, C40, and C43 each coordinate Zn(2+).

It belongs to the universal ribosomal protein uS14 family. Zinc-binding uS14 subfamily. As to quaternary structure, part of the 30S ribosomal subunit. Contacts proteins S3 and S10. It depends on Zn(2+) as a cofactor.

In terms of biological role, binds 16S rRNA, required for the assembly of 30S particles and may also be responsible for determining the conformation of the 16S rRNA at the A site. This chain is Small ribosomal subunit protein uS14, found in Spiroplasma citri.